Here is a 274-residue protein sequence, read N- to C-terminus: NH(3)-dependent NAD(+) synthetase (274 aa).

Position 46–53 (46–53) interacts with ATP; that stretch reads GISGGQDS. Aspartate 52 contacts Mg(2+). Arginine 140 lines the deamido-NAD(+) pocket. ATP is bound at residue threonine 160. Mg(2+) is bound at residue glutamate 165. Positions 173 and 180 each coordinate deamido-NAD(+). ATP contacts are provided by lysine 189 and threonine 211. Residue 260 to 261 coordinates deamido-NAD(+); it reads HK.

Belongs to the NAD synthetase family. As to quaternary structure, homodimer.

The catalysed reaction is deamido-NAD(+) + NH4(+) + ATP = AMP + diphosphate + NAD(+) + H(+). It participates in cofactor biosynthesis; NAD(+) biosynthesis; NAD(+) from deamido-NAD(+) (ammonia route): step 1/1. Catalyzes the ATP-dependent amidation of deamido-NAD to form NAD. Uses ammonia as a nitrogen source. This is NH(3)-dependent NAD(+) synthetase from Streptococcus gordonii (strain Challis / ATCC 35105 / BCRC 15272 / CH1 / DL1 / V288).